Here is a 337-residue protein sequence, read N- to C-terminus: Biotin synthase (337 aa).

The Radical SAM core domain occupies 58-283 (EDVEVEGIVS…RTVLRYAGGR (226 aa)). Positions 73, 77, and 80 each coordinate [4Fe-4S] cluster. [2Fe-2S] cluster contacts are provided by C116, C149, C208, and R278.

The protein belongs to the radical SAM superfamily. Biotin synthase family. As to quaternary structure, homodimer. [4Fe-4S] cluster is required as a cofactor. Requires [2Fe-2S] cluster as cofactor.

The catalysed reaction is (4R,5S)-dethiobiotin + (sulfur carrier)-SH + 2 reduced [2Fe-2S]-[ferredoxin] + 2 S-adenosyl-L-methionine = (sulfur carrier)-H + biotin + 2 5'-deoxyadenosine + 2 L-methionine + 2 oxidized [2Fe-2S]-[ferredoxin]. Its pathway is cofactor biosynthesis; biotin biosynthesis; biotin from 7,8-diaminononanoate: step 2/2. In terms of biological role, catalyzes the conversion of dethiobiotin (DTB) to biotin by the insertion of a sulfur atom into dethiobiotin via a radical-based mechanism. The chain is Biotin synthase from Pseudarthrobacter chlorophenolicus (strain ATCC 700700 / DSM 12829 / CIP 107037 / JCM 12360 / KCTC 9906 / NCIMB 13794 / A6) (Arthrobacter chlorophenolicus).